We begin with the raw amino-acid sequence, 436 residues long: 3-ketoacyl-CoA thiolase (436 aa).

Residue C99 is the Acyl-thioester intermediate of the active site. Active-site proton acceptor residues include H392 and C422.

The protein belongs to the thiolase-like superfamily. Thiolase family. In terms of assembly, heterotetramer of two alpha chains (FadJ) and two beta chains (FadI).

The protein localises to the cytoplasm. The enzyme catalyses an acyl-CoA + acetyl-CoA = a 3-oxoacyl-CoA + CoA. Its pathway is lipid metabolism; fatty acid beta-oxidation. In terms of biological role, catalyzes the final step of fatty acid oxidation in which acetyl-CoA is released and the CoA ester of a fatty acid two carbons shorter is formed. The chain is 3-ketoacyl-CoA thiolase from Escherichia coli O7:K1 (strain IAI39 / ExPEC).